Here is a 330-residue protein sequence, read N- to C-terminus: Bifunctional pinoresinol-lariciresinol reductase 2 (330 aa).

Residues 28–34, arginine 53, and lysine 62 contribute to the NADP(+) site; that span reads GGTGYLG. The active-site Proton acceptor is lysine 156. An NADP(+)-binding site is contributed by arginine 160. Position 288 (histidine 288) interacts with substrate.

It belongs to the NmrA-type oxidoreductase family. Isoflavone reductase subfamily. As to quaternary structure, dimer. As to expression, expressed in leaves, stems, leaves and seeds.

It carries out the reaction (+)-lariciresinol + NADP(+) = (+)-pinoresinol + NADPH + H(+). It catalyses the reaction (-)-secoisolariciresinol + NADP(+) = (+)-lariciresinol + NADPH + H(+). Functionally, reductase involved in lignan biosynthesis. Catalyzes the enantioselective conversion of (+)-pinoresinol into (+)-lariciresinol and of (+)-lariciresinol into (-)-secoisolariciresinol. Abstracts the 4R-hydride from the NADPH cofactor during catalysis. In Linum usitatissimum (Flax), this protein is Bifunctional pinoresinol-lariciresinol reductase 2 (PLR_Lu2).